Here is a 124-residue protein sequence, read N- to C-terminus: Probable glycine cleavage system H protein (124 aa).

Residues 23–104 (VATVGITDYA…PYKNWLVKIR (82 aa)) enclose the Lipoyl-binding domain. At Lys64 the chain carries N6-lipoyllysine.

It belongs to the GcvH family. As to quaternary structure, the glycine cleavage system is composed of four proteins: P, T, L and H. Requires (R)-lipoate as cofactor.

The glycine cleavage system catalyzes the degradation of glycine. The H protein shuttles the methylamine group of glycine from the P protein to the T protein. The protein is Probable glycine cleavage system H protein of Picrophilus torridus (strain ATCC 700027 / DSM 9790 / JCM 10055 / NBRC 100828 / KAW 2/3).